We begin with the raw amino-acid sequence, 139 residues long: Large ribosomal subunit protein uL16 (139 aa).

Residues 1 to 19 (MLIPRKVKHRKQHHPKRSG) are compositionally biased toward basic residues. The disordered stretch occupies residues 1–22 (MLIPRKVKHRKQHHPKRSGVAK).

This sequence belongs to the universal ribosomal protein uL16 family. In terms of assembly, part of the 50S ribosomal subunit.

In terms of biological role, binds 23S rRNA and is also seen to make contacts with the A and possibly P site tRNAs. The protein is Large ribosomal subunit protein uL16 of Acidothermus cellulolyticus (strain ATCC 43068 / DSM 8971 / 11B).